We begin with the raw amino-acid sequence, 125 residues long: Hydrogenase maturation factor HypA (125 aa).

Histidine 2 serves as a coordination point for Ni(2+). Cysteine 73, cysteine 76, cysteine 96, and cysteine 99 together coordinate Zn(2+).

It belongs to the HypA/HybF family.

Functionally, involved in the maturation of [NiFe] hydrogenases. Required for nickel insertion into the metal center of the hydrogenase. This chain is Hydrogenase maturation factor HypA, found in Methanobrevibacter smithii (strain ATCC 35061 / DSM 861 / OCM 144 / PS).